We begin with the raw amino-acid sequence, 565 residues long: CTP synthase (565 aa).

Residues 1–272 (MARPKNVKHI…DLRVMKKLGL (272 aa)) are amidoligase domain. Position 18 (serine 18) interacts with CTP. Serine 18 lines the UTP pocket. Residue 19–24 (SLGKGI) participates in ATP binding. Tyrosine 59 contributes to the L-glutamine binding site. Position 76 (aspartate 76) interacts with ATP. Positions 76 and 146 each coordinate Mg(2+). CTP-binding positions include 153 to 155 (DIE), 193 to 198 (KTKPTQ), and lysine 229. UTP-binding positions include 193–198 (KTKPTQ) and lysine 229. A Glutamine amidotransferase type-1 domain is found at 299–543 (TIGVCGKYTE…VQAAKEFAMG (245 aa)). Residue glycine 363 participates in L-glutamine binding. Catalysis depends on cysteine 390, which acts as the Nucleophile; for glutamine hydrolysis. L-glutamine contacts are provided by residues 391–394 (LGMQ), glutamate 414, and arginine 471. Active-site residues include histidine 516 and glutamate 518.

This sequence belongs to the CTP synthase family. In terms of assembly, homotetramer.

The catalysed reaction is UTP + L-glutamine + ATP + H2O = CTP + L-glutamate + ADP + phosphate + 2 H(+). It catalyses the reaction L-glutamine + H2O = L-glutamate + NH4(+). It carries out the reaction UTP + NH4(+) + ATP = CTP + ADP + phosphate + 2 H(+). Its pathway is pyrimidine metabolism; CTP biosynthesis via de novo pathway; CTP from UDP: step 2/2. Its activity is regulated as follows. Allosterically activated by GTP, when glutamine is the substrate; GTP has no effect on the reaction when ammonia is the substrate. The allosteric effector GTP functions by stabilizing the protein conformation that binds the tetrahedral intermediate(s) formed during glutamine hydrolysis. Inhibited by the product CTP, via allosteric rather than competitive inhibition. Its function is as follows. Catalyzes the ATP-dependent amination of UTP to CTP with either L-glutamine or ammonia as the source of nitrogen. Regulates intracellular CTP levels through interactions with the four ribonucleotide triphosphates. This is CTP synthase from Chlorobaculum parvum (strain DSM 263 / NCIMB 8327) (Chlorobium vibrioforme subsp. thiosulfatophilum).